The sequence spans 61 residues: Small ribosomal subunit protein uS14 (61 aa).

Residues Cys-24, Cys-27, Cys-40, and Cys-43 each coordinate Zn(2+).

It belongs to the universal ribosomal protein uS14 family. Zinc-binding uS14 subfamily. In terms of assembly, part of the 30S ribosomal subunit. Contacts proteins S3 and S10. The cofactor is Zn(2+).

Functionally, binds 16S rRNA, required for the assembly of 30S particles and may also be responsible for determining the conformation of the 16S rRNA at the A site. In Nautilia profundicola (strain ATCC BAA-1463 / DSM 18972 / AmH), this protein is Small ribosomal subunit protein uS14.